A 490-amino-acid chain; its full sequence is Betaine aldehyde dehydrogenase (490 aa).

K(+)-binding residues include T26, I27, and D93. Residue 150–152 (GAW) coordinates NAD(+). K162 serves as the catalytic Charge relay system. Residue 176–179 (KPSE) coordinates NAD(+). Position 180 (V180) interacts with K(+). Residue 230-233 (GVAS) participates in NAD(+) binding. Residue L246 participates in K(+) binding. The active-site Proton acceptor is the E252. NAD(+) is bound by residues G254, C286, and E387. The active-site Nucleophile is C286. Cysteine sulfenic acid (-SOH) is present on C286. K(+) contacts are provided by K457 and G460. The Charge relay system role is filled by E464.

It belongs to the aldehyde dehydrogenase family. Dimer of dimers. Requires K(+) as cofactor.

The catalysed reaction is betaine aldehyde + NAD(+) + H2O = glycine betaine + NADH + 2 H(+). It participates in amine and polyamine biosynthesis; betaine biosynthesis via choline pathway; betaine from betaine aldehyde: step 1/1. Functionally, involved in the biosynthesis of the osmoprotectant glycine betaine. Catalyzes the irreversible oxidation of betaine aldehyde to the corresponding acid. This is Betaine aldehyde dehydrogenase from Escherichia coli (strain SE11).